Reading from the N-terminus, the 407-residue chain is Imidazolonepropionase (407 aa).

Fe(3+) is bound by residues histidine 74 and histidine 76. Residues histidine 74 and histidine 76 each contribute to the Zn(2+) site. 4-imidazolone-5-propanoate is bound by residues arginine 83, tyrosine 146, and histidine 179. Tyrosine 146 contributes to the N-formimidoyl-L-glutamate binding site. Fe(3+) is bound at residue histidine 244. Position 244 (histidine 244) interacts with Zn(2+). Glutamine 247 serves as a coordination point for 4-imidazolone-5-propanoate. Aspartate 319 is a binding site for Fe(3+). Residue aspartate 319 participates in Zn(2+) binding. Residues asparagine 321 and glycine 323 each contribute to the N-formimidoyl-L-glutamate site. A 4-imidazolone-5-propanoate-binding site is contributed by threonine 324.

It belongs to the metallo-dependent hydrolases superfamily. HutI family. The cofactor is Zn(2+). Fe(3+) is required as a cofactor.

The protein resides in the cytoplasm. The catalysed reaction is 4-imidazolone-5-propanoate + H2O = N-formimidoyl-L-glutamate. The protein operates within amino-acid degradation; L-histidine degradation into L-glutamate; N-formimidoyl-L-glutamate from L-histidine: step 3/3. Catalyzes the hydrolytic cleavage of the carbon-nitrogen bond in imidazolone-5-propanoate to yield N-formimidoyl-L-glutamate. It is the third step in the universal histidine degradation pathway. This is Imidazolonepropionase from Salmonella paratyphi A (strain ATCC 9150 / SARB42).